The following is a 171-amino-acid chain: Myelin basic protein (171 aa).

The residue at position 1 (alanine 1) is an N-acetylalanine. Positions alanine 1 to serine 12 are enriched in basic residues. The interval alanine 1–arginine 171 is disordered. Serine 7 and serine 12 each carry phosphoserine. The residue at position 14 (tyrosine 14) is a Phosphotyrosine. The residue at position 19 (serine 19) is a Phosphoserine. Threonine 20 is modified (phosphothreonine). Arginine 25 and arginine 31 each carry citrulline. The residue at position 35 (threonine 35) is a Phosphothreonine. Serine 39 bears the Phosphoserine mark. Omega-N-methylarginine occurs at positions 42 and 48. The residue at position 55 (serine 55) is a Phosphoserine. Threonine 66 is subject to Phosphothreonine. A Phosphotyrosine modification is found at tyrosine 68. 2 positions are modified to phosphothreonine: threonine 95 and threonine 98. Residue glutamine 103 is modified to Deamidated glutamine. Arginine 107 is subject to Omega-N-methylarginine; alternate. Position 107 is a symmetric dimethylarginine; alternate (arginine 107). Serine 115 is modified (phosphoserine). The residue at position 122 (lysine 122) is an N6-acetyllysine. Position 130 is a citrulline (arginine 130). Position 148 is a deamidated glutamine (glutamine 148). Arginine 160 is modified (citrulline). Residue serine 162 is modified to Phosphoserine. Phosphoserine; by UHMK1 is present on serine 166. Position 171 is a citrulline (arginine 171).

The protein belongs to the myelin basic protein family. As to quaternary structure, homodimer. Post-translationally, as in other animals, several charge isomers may be produced as a result of optional post-translational modifications, such as phosphorylation of serine or threonine residues, deamidation of glutamine or asparagine residues, citrullination and methylation of arginine residues. Phosphorylated by TAOK2, VRK2, MAPK11, MAPK12, MAPK14 and MINK1. In terms of processing, proteolytically cleaved in B cell lysosomes by cathepsin CTSG which degrades the major immunogenic MBP epitope and prevents the activation of MBP-specific autoreactive T cells.

It localises to the myelin membrane. Its function is as follows. Is, with PLP, the most abundant protein component of the myelin membrane in the CNS. Has a role in both the formation and stabilization of this compact multilayer arrangement of bilayers. Each splice variant and charge isomer may have a specialized function in the assembly of an optimized, biochemically functional myelin membrane. The protein is Myelin basic protein (MBP) of Sus scrofa (Pig).